The following is a 102-amino-acid chain: Aspartyl/glutamyl-tRNA(Asn/Gln) amidotransferase subunit C (102 aa).

The protein belongs to the GatC family. In terms of assembly, heterotrimer of A, B and C subunits.

It catalyses the reaction L-glutamyl-tRNA(Gln) + L-glutamine + ATP + H2O = L-glutaminyl-tRNA(Gln) + L-glutamate + ADP + phosphate + H(+). The enzyme catalyses L-aspartyl-tRNA(Asn) + L-glutamine + ATP + H2O = L-asparaginyl-tRNA(Asn) + L-glutamate + ADP + phosphate + 2 H(+). Allows the formation of correctly charged Asn-tRNA(Asn) or Gln-tRNA(Gln) through the transamidation of misacylated Asp-tRNA(Asn) or Glu-tRNA(Gln) in organisms which lack either or both of asparaginyl-tRNA or glutaminyl-tRNA synthetases. The reaction takes place in the presence of glutamine and ATP through an activated phospho-Asp-tRNA(Asn) or phospho-Glu-tRNA(Gln). In Bordetella avium (strain 197N), this protein is Aspartyl/glutamyl-tRNA(Asn/Gln) amidotransferase subunit C.